A 132-amino-acid chain; its full sequence is Small ribosomal subunit protein uS8 (132 aa).

The protein belongs to the universal ribosomal protein uS8 family. In terms of assembly, part of the 30S ribosomal subunit. Contacts proteins S5 and S12.

In terms of biological role, one of the primary rRNA binding proteins, it binds directly to 16S rRNA central domain where it helps coordinate assembly of the platform of the 30S subunit. The sequence is that of Small ribosomal subunit protein uS8 from Bradyrhizobium sp. (strain ORS 278).